We begin with the raw amino-acid sequence, 79 residues long: DNA-directed RNA polymerase subunit omega (79 aa).

This sequence belongs to the RNA polymerase subunit omega family. As to quaternary structure, the RNAP catalytic core consists of 2 alpha, 1 beta, 1 beta' and 1 omega subunit. When a sigma factor is associated with the core the holoenzyme is formed, which can initiate transcription.

The enzyme catalyses RNA(n) + a ribonucleoside 5'-triphosphate = RNA(n+1) + diphosphate. Promotes RNA polymerase assembly. Latches the N- and C-terminal regions of the beta' subunit thereby facilitating its interaction with the beta and alpha subunits. In Thermotoga petrophila (strain ATCC BAA-488 / DSM 13995 / JCM 10881 / RKU-1), this protein is DNA-directed RNA polymerase subunit omega.